An 81-amino-acid chain; its full sequence is Sulfur carrier protein TusA (81 aa).

The Cysteine persulfide intermediate role is filled by C19.

This sequence belongs to the sulfur carrier protein TusA family.

Its subcellular location is the cytoplasm. Its function is as follows. Sulfur carrier protein which probably makes part of a sulfur-relay system. The chain is Sulfur carrier protein TusA from Shewanella woodyi (strain ATCC 51908 / MS32).